The sequence spans 367 residues: Cyclin-Y-like protein 1 (367 aa).

3 positions are modified to phosphoserine: serine 73, serine 111, and serine 118. In terms of domain architecture, Cyclin N-terminal spans glutamate 186–asparagine 291. Phosphoserine is present on serine 352.

The protein belongs to the cyclin family. Cyclin Y subfamily. Interacts with CDK16; this interaction mutually increases the stability of CDK16 and CCNYL1 and increases the kinase activity of CDK16. Highly expressed in the testis. Largely restricted to germ cells in the testis.

The protein resides in the cell membrane. In terms of biological role, key regulator of Wnt signaling implicated in various biological processes including male fertility, embryonic neurogenesis and cortex development. Activates the cyclin-dependent kinase CDK16, and promotes sperm maturation. In Mus musculus (Mouse), this protein is Cyclin-Y-like protein 1.